A 142-amino-acid chain; its full sequence is Arginine decarboxylase proenzyme (142 aa).

The Schiff-base intermediate with substrate; via pyruvic acid role is filled by S81. Pyruvic acid (Ser); by autocatalysis is present on S81. H86 (proton acceptor; for processing activity) is an active-site residue. The active-site Proton donor; for catalytic activity is C101.

This sequence belongs to the prokaryotic AdoMetDC family. Type 1 subfamily. As to quaternary structure, heterooctamer of four alpha and four beta chains arranged as a tetramer of alpha/beta heterodimers. Pyruvate is required as a cofactor. Is synthesized initially as an inactive proenzyme. Formation of the active enzyme involves a self-maturation process in which the active site pyruvoyl group is generated from an internal serine residue via an autocatalytic post-translational modification. Two non-identical subunits are generated from the proenzyme in this reaction, and the pyruvate is formed at the N-terminus of the alpha chain, which is derived from the carboxyl end of the proenzyme. The post-translation cleavage follows an unusual pathway, termed non-hydrolytic serinolysis, in which the side chain hydroxyl group of the serine supplies its oxygen atom to form the C-terminus of the beta chain, while the remainder of the serine residue undergoes an oxidative deamination to produce ammonia and the pyruvoyl group blocking the N-terminus of the alpha chain.

The enzyme catalyses L-arginine + H(+) = agmatine + CO2. Its pathway is amine and polyamine biosynthesis; agmatine biosynthesis; agmatine from L-arginine: step 1/1. In terms of biological role, specifically catalyzes the decarboxylation of L-arginine to agmatine. Has no S-adenosylmethionine decarboxylase (AdoMetDC) activity. This chain is Arginine decarboxylase proenzyme, found in Hyperthermus butylicus (strain DSM 5456 / JCM 9403 / PLM1-5).